An 812-amino-acid polypeptide reads, in one-letter code: MDHKEIILLFLLFLKPGQGDSLDGYVSTQGASLHSLTKKQLAAGSIADCLAKCEGETDFICRSFQYHSKEQQCVIMAENSKTSSIIRMRDVILFEKRVYLSECKTGIGKGYRGTMSKTKTGVTCQKWSDTSPHVPKYSPSTHPSEGLEENYCRNPDNDEQGPWCYTTDPDQRYEYCNIPECEEECMYCSGEKYEGKISKTMSGLDCQSWDSQSPHAHGYIPAKFPSKNLKMNYCRNPDGEPRPWCFTTDPNKRWEYCDIPRCTTPPPPPGPTYQCLKGRGENYRGTVSVTASGKTCQRWSEQTPHRHNRTPENFPCKNLEENYCRNPDGETAPWCYTTDSQLRWEYCEIPSCGSSVSPDQSDSSVLPEQTPVVQECYQGNGKSYRGTSSTTNTGKKCQSWVSMTPHSHSKTPANFPDAGLEMNYCRNPDNDQRGPWCFTTDPSVRWEYCNLKRCSETGGGVAESAIVPQVPSAPGTSETDCMYGNGKEYRGKTAVTAAGTPCQEWAAQEPHSHRIFTPQTNPRAGLEKNYCRNPDGDVNGPWCYTMNPRKLYDYCNIPLCASLSSFECGKPQVEPKKCPGRVVGGCVANPHSWPWQISLRTRFSGQHFCGGTLISPEWVLTAAHCLEKSSRPEFYKVILGAHEERILGSDVQQIAVTKLVLEPNDADIALLKLSRPATITDNVIPACLPSPNYVVADRTLCYITGWGETKGTPGAGRLKEAQLPVIENKVCNRAEYLNNRVKSTELCAGHLAGGIDSCQGDSGGPLVCFEKDKYILQGVTSWGLGCARPNKPGVYVRVSRYVNWIEREMRND.

Residues 1–19 (MDHKEIILLFLLFLKPGQG) form the signal peptide. A PAN domain is found at 20 to 98 (DSLDGYVSTQ…RDVILFEKRV (79 aa)). 21 disulfides stabilise this stretch: C49/C73, C53/C61, C103/C181, C124/C164, C152/C176, C185/C262, C188/C316, C206/C245, C234/C257, C275/C352, C296/C335, C324/C347, C376/C454, C397/C437, C425/C449, C481/C560, C502/C543, C531/C555, C568/C687, C578/C586, and C609/C625. Kringle domains are found at residues 102–181 (ECKT…IPEC), 184–262 (ECMY…IPRC), 274–352 (QCLK…IPSC), 375–454 (ECYQ…LKRC), and 480–560 (DCMY…IPLC). The Peptidase S1 domain maps to 582-810 (VVGGCVANPH…YVNWIEREMR (229 aa)). S598 carries the post-translational modification Phosphoserine. Catalysis depends on charge relay system residues H624 and D667. S690 bears the Phosphoserine mark. Disulfide bonds link C701–C768, C731–C747, and C758–C786. The Charge relay system role is filled by S762.

The protein belongs to the peptidase S1 family. Plasminogen subfamily. In terms of assembly, interacts (both mature PLG and the angiostatin peptide) with AMOT and CSPG4. Interacts (via the Kringle domains) with HRG; the interaction tethers PLG to the cell surface and enhances its activation. Interacts (via Kringle 4 domain) with ADA; the interaction stimulates PLG activation when in complex with DPP4. Angiostatin: Interacts with ATP5F1A; the interaction inhibits most of the angiogenic effects of angiostatin. Post-translationally, in the presence of the inhibitor, the activation involves only cleavage after Arg-581, yielding two chains held together by two disulfide bonds. In the absence of the inhibitor, the activation involves additionally the removal of the activation peptide.

It localises to the secreted. It catalyses the reaction Preferential cleavage: Lys-|-Xaa &gt; Arg-|-Xaa, higher selectivity than trypsin. Converts fibrin into soluble products.. With respect to regulation, converted into plasmin by plasminogen activators, both plasminogen and its activator being bound to fibrin. Cannot be activated with streptokinase. Plasmin dissolves the fibrin of blood clots and acts as a proteolytic factor in a variety of other processes including embryonic development, tissue remodeling, tumor invasion, and inflammation. In ovulation, weakens the walls of the Graafian follicle. It activates the urokinase-type plasminogen activator, collagenases and several complement zymogens, such as C1, C4 and C5. Cleavage of fibronectin and laminin leads to cell detachment and apoptosis. Also cleaves fibrin, thrombospondin and von Willebrand factor. Its role in tissue remodeling and tumor invasion may be modulated by CSPG4. Binds to cells. Functionally, angiostatin is an angiogenesis inhibitor that blocks neovascularization and growth of experimental primary and metastatic tumors in vivo. The polypeptide is Plasminogen (Plg) (Rattus norvegicus (Rat)).